The chain runs to 339 residues: Photosystem II assembly lipoprotein Ycf48 (339 aa).

A signal peptide spans 1–23 (MNRLIKFSFNLILIFVLGLGLSG). A lipid anchor (N-palmitoyl cysteine) is attached at cysteine 24. Residue cysteine 24 is the site of S-diacylglycerol cysteine attachment.

This sequence belongs to the Ycf48 family. In terms of assembly, part of early PSII assembly complexes which includes D1 (psbA) and PsbI; not found in mature PSII. Binds to the lumenal side of PSII complexes. Interacts with YidC.

It is found in the cellular thylakoid membrane. Functionally, a factor required for optimal assembly of photosystem II (PSII), acting in the early stages of PSII assembly. Also plays a role in replacement of photodamaged D1 (psbA). Assists YidC in synthesis of chlorophyll-binding proteins. The polypeptide is Photosystem II assembly lipoprotein Ycf48 (Prochlorococcus marinus (strain SARG / CCMP1375 / SS120)).